Reading from the N-terminus, the 311-residue chain is Methionyl-tRNA formyltransferase (311 aa).

Position 110 to 113 (S110 to P113) interacts with (6S)-5,6,7,8-tetrahydrofolate.

This sequence belongs to the Fmt family.

The catalysed reaction is L-methionyl-tRNA(fMet) + (6R)-10-formyltetrahydrofolate = N-formyl-L-methionyl-tRNA(fMet) + (6S)-5,6,7,8-tetrahydrofolate + H(+). In terms of biological role, attaches a formyl group to the free amino group of methionyl-tRNA(fMet). The formyl group appears to play a dual role in the initiator identity of N-formylmethionyl-tRNA by promoting its recognition by IF2 and preventing the misappropriation of this tRNA by the elongation apparatus. The chain is Methionyl-tRNA formyltransferase from Streptococcus pneumoniae serotype 19F (strain G54).